We begin with the raw amino-acid sequence, 205 residues long: Small ribosomal subunit protein uS4 (205 aa).

The segment covering 1 to 12 (MSKRIQAKHKLD) has biased composition (basic residues). Residues 1–49 (MSKRIQAKHKLDRRMGQNIWGRPKSPVNRREYGPGQHGQRRKGKMSDFG) form a disordered region. The 62-residue stretch at 94 to 155 (RRLDAVVYRA…SSRQLEIVIV (62 aa)) folds into the S4 RNA-binding domain.

This sequence belongs to the universal ribosomal protein uS4 family. As to quaternary structure, part of the 30S ribosomal subunit. Contacts protein S5. The interaction surface between S4 and S5 is involved in control of translational fidelity.

Functionally, one of the primary rRNA binding proteins, it binds directly to 16S rRNA where it nucleates assembly of the body of the 30S subunit. With S5 and S12 plays an important role in translational accuracy. The protein is Small ribosomal subunit protein uS4 of Methylobacterium radiotolerans (strain ATCC 27329 / DSM 1819 / JCM 2831 / NBRC 15690 / NCIMB 10815 / 0-1).